Reading from the N-terminus, the 203-residue chain is Secreted phosphoprotein 24 (203 aa).

The signal sequence occupies residues 1–23 (MEKMVMKMLVIFVFGMNHWTCTG). 2 disulfide bridges follow: C86/C97 and C110/C128. At S90 the chain carries Phosphoserine. Phosphoserine occurs at positions 138, 139, 166, and 175. The tract at residues 155–174 (NSHLLGLTPDRSRGEPLYER) is disordered. Residues 164–174 (DRSRGEPLYER) show a composition bias toward basic and acidic residues.

It belongs to the SPP2 family. In terms of processing, multiply phosphorylated at serine residues. Post-translationally, phosphorylation sites are present in the extracellular medium.

It localises to the secreted. Could coordinate an aspect of bone turnover. The chain is Secreted phosphoprotein 24 (SPP2) from Ovis aries (Sheep).